The chain runs to 206 residues: Probable glutathione S-transferase 7 (206 aa).

The GST N-terminal domain occupies 2–79; it reads VHYKVSYFPI…YLARQFGING (78 aa). Glutathione contacts are provided by residues Tyr8, Trp39, Lys43, 49–51, and 63–64; these read GQL and QS. The 126-residue stretch at 81-206 folds into the GST C-terminal domain; it reads CAWEEAQVNS…WLETRPVTPF (126 aa).

Belongs to the GST superfamily. Sigma family.

The catalysed reaction is RX + glutathione = an S-substituted glutathione + a halide anion + H(+). Functionally, conjugation of reduced glutathione to a wide number of exogenous and endogenous hydrophobic electrophiles. May play a role in the detoxification of reactive oxygen species produced during pathogenic bacterial infection. This chain is Probable glutathione S-transferase 7 (gst-7), found in Caenorhabditis elegans.